We begin with the raw amino-acid sequence, 373 residues long: Probable pectin lyase C (373 aa).

An N-terminal signal peptide occupies residues 1 to 17 (MKKYLLSLLAAVTYTTA). Cystine bridges form between Cys-78-Cys-95 and Cys-87-Cys-215. 2 N-linked (GlcNAc...) asparagine glycosylation sites follow: Asn-140 and Asn-229. Arg-245 is an active-site residue. Cys-315 and Cys-323 are disulfide-bonded.

It belongs to the polysaccharide lyase 1 family.

Its subcellular location is the secreted. The catalysed reaction is Eliminative cleavage of (1-&gt;4)-alpha-D-galacturonan methyl ester to give oligosaccharides with 4-deoxy-6-O-methyl-alpha-D-galact-4-enuronosyl groups at their non-reducing ends.. Its function is as follows. Pectinolytic enzymes consist of four classes of enzymes: pectin lyase, polygalacturonase, pectin methylesterase and rhamnogalacturonase. Among pectinolytic enzymes, pectin lyase is the most important in depolymerization of pectin, since it cleaves internal glycosidic bonds of highly methylated pectins. This chain is Probable pectin lyase C (pelC), found in Emericella nidulans (strain FGSC A4 / ATCC 38163 / CBS 112.46 / NRRL 194 / M139) (Aspergillus nidulans).